The primary structure comprises 37 residues: Large ribosomal subunit protein bL36 (37 aa).

This sequence belongs to the bacterial ribosomal protein bL36 family.

The polypeptide is Large ribosomal subunit protein bL36 (Sulfurovum sp. (strain NBC37-1)).